The sequence spans 242 residues: Linker for activation of T-cells family member 1 (242 aa).

Topologically, residues 1 to 4 (MEAD) are extracellular. Residues 5-28 (ALSPVGLGLLLLPFLVTLLAALCV) traverse the membrane as a helical; Signal-anchor for type III membrane protein segment. Residues C27 and C30 are each lipidated (S-palmitoyl cysteine). Residues 29–242 (RCRELPVSYD…PDYENLQELN (214 aa)) are Cytoplasmic-facing. T40 is subject to Phosphothreonine. S41, S44, S87, S104, S109, and S112 each carry phosphoserine. A disordered region spans residues 78–118 (QPDLLPIPRSPQPLGGSHRMPSSQQNSDDANSVASYENQEP). A compositionally biased stretch (polar residues) spans 97–115 (MPSSQQNSDDANSVASYEN). Positions 136-139 (YLVV) are interaction with PLCG1. The residue at position 175 (Y175) is a Phosphotyrosine. 2 interaction with GRB2, GRAP2 and PIK3R1 regions span residues 175–178 (YVNV) and 195–198 (YVNV). The disordered stretch occupies residues 176 to 242 (VNVPESEESA…PDYENLQELN (67 aa)). S199, S212, and S215 each carry phosphoserine. Over residues 217 to 234 (EVEDEGEEEGVDGEEAPD) the composition is skewed to acidic residues. Residue Y235 is modified to Phosphotyrosine.

When phosphorylated, interacts directly with the PIK3R1 subunit of phosphoinositide 3-kinase and the SH2 domains of GRB2, GRAP, GRAP2, PLCG1 and PLCG2. Interacts indirectly with CBL, SOS, VAV, and LCP2. Interacts with SHB and SKAP2. Interacts with FCGR1A. Interacts with CLNK. Interacts with GRB2, PLCG1 and THEMIS upon TCR activation in thymocytes. Interacts with THEMIS2. Post-translationally, phosphorylated on tyrosines by ZAP70 upon TCR activation, or by SYK upon other immunoreceptor activation; which leads to the recruitment of multiple signaling molecules. Is one of the most prominently tyrosine-phosphorylated proteins detected following TCR engagement. May be dephosphorylated by PTPRJ. Phosphorylated by ITK leading to the recruitment of VAV1 to LAT-containing complexes. In terms of processing, palmitoylation of Cys-27 and Cys-30 is required for raft targeting and efficient phosphorylation. Phosphorylated on tyrosines by ZAP70 upon TCR activation, or by SYK upon other immunoreceptor activation; which leads to the recruitment of multiple signaling molecules. Is one of the most prominently tyrosine-phosphorylated proteins detected following TCR engagement. May be dephosphorylated by PTPRJ. Phosphorylated by ITK leading to the recruitment of VAV1 to LAT-containing complexes. Post-translationally, 'Lys-63'-linked ubiquitinated by TRAF6. In terms of tissue distribution, expressed in T-cells and mast cells.

Its subcellular location is the cell membrane. Required for TCR (T-cell antigen receptor)- and pre-TCR-mediated signaling, both in mature T-cells and during their development. Involved in FCGR3 (low affinity immunoglobulin gamma Fc region receptor III)-mediated signaling in natural killer cells and FCER1 (high affinity immunoglobulin epsilon receptor)-mediated signaling in mast cells. Couples activation of these receptors and their associated kinases with distal intracellular events such as mobilization of intracellular calcium stores, PKC activation, MAPK activation or cytoskeletal reorganization through the recruitment of PLCG1, GRB2, GRAP2, and other signaling molecules. In Mus musculus (Mouse), this protein is Linker for activation of T-cells family member 1 (Lat).